Reading from the N-terminus, the 67-residue chain is Phycobilisome 7.8 kDa linker polypeptide, allophycocyanin-associated, core (67 aa).

The CpcD-like domain occupies 1–56 (MRMFRITACLPSPSKIRTQRELQNTFFTKLVPYDAWFREQQRIQKLGGKIIKVELA).

Belongs to the phycobilisome linker protein family.

It is found in the cellular thylakoid membrane. Functionally, rod linker protein, associated with allophycocyanin. Linker polypeptides determine the state of aggregation and the location of the disk-shaped phycobiliprotein units within the phycobilisome and modulate their spectroscopic properties in order to mediate a directed and optimal energy transfer. The chain is Phycobilisome 7.8 kDa linker polypeptide, allophycocyanin-associated, core (apcC) from Synechococcus sp. (strain ATCC 27144 / PCC 6301 / SAUG 1402/1) (Anacystis nidulans).